The following is a 424-amino-acid chain: MSYIIDRRLNAKKKSTVNRQRFLKRYRKHIKKAVTDAISRRSITDLEHGEEIHIPAEDMKESFFHHGQGGHAKRVLPGNQDFIGGDRIERPPSGGAGGSGSGASDSGKGEDEFVFQITQAEFLDFMFDELALPNMIKRQLLGSDEFKLHQAGFSNQGSPGQVDVVRSLKSAHARRIALTLSKRKKLKALEKQLHLLVAKEPVLKNQVEIEQLREKISTLKSRVKRVPWLDDFDLKYHLRAKEPAPQAKAVMFCIMDVSGSMNQATKEIAKRFFILLYLFIQRNYQRTEIVFIRHHTVAMEVDEQEFFYSRETGGTIVSSALKLMQQIIEQRYPLGDWNIYAAQASDGDNWNNDSAVCKEILCKALLPKLQYFSYIEITPNAHQLLWHSYQQVKANFPDTFAMEQVVDAAEIYTVFREIFHKQVI.

A disordered region spans residues 77 to 108 (PGNQDFIGGDRIERPPSGGAGGSGSGASDSGK).

Belongs to the UPF0229 family.

The chain is UPF0229 protein Ping_2705 from Psychromonas ingrahamii (strain DSM 17664 / CCUG 51855 / 37).